A 94-amino-acid chain; its full sequence is Large ribosomal subunit protein uL23 (94 aa).

It belongs to the universal ribosomal protein uL23 family. Part of the 50S ribosomal subunit. Contacts protein L29, and trigger factor when it is bound to the ribosome.

One of the early assembly proteins it binds 23S rRNA. One of the proteins that surrounds the polypeptide exit tunnel on the outside of the ribosome. Forms the main docking site for trigger factor binding to the ribosome. This is Large ribosomal subunit protein uL23 from Mycoplasma mycoides subsp. mycoides SC (strain CCUG 32753 / NCTC 10114 / PG1).